A 416-amino-acid chain; its full sequence is D-amino acid dehydrogenase (416 aa).

3-17 (ITILGSGVIGVTTAY) contributes to the FAD binding site.

Belongs to the DadA oxidoreductase family. FAD is required as a cofactor.

It catalyses the reaction a D-alpha-amino acid + A + H2O = a 2-oxocarboxylate + AH2 + NH4(+). The protein operates within amino-acid degradation; D-alanine degradation; NH(3) and pyruvate from D-alanine: step 1/1. In terms of biological role, oxidative deamination of D-amino acids. The sequence is that of D-amino acid dehydrogenase from Brucella canis (strain ATCC 23365 / NCTC 10854 / RM-666).